The sequence spans 932 residues: Protocadherin gamma-A2 (932 aa).

A signal peptide spans 1–28 (MAALQKLPHCRKLVLLCFLLATLWEARA). 6 Cadherin domains span residues 29–133 (GQIR…APRF), 134–242 (GVEE…APVF), 243–347 (TQPE…APEF), 348–452 (YMTS…APAF), 453–562 (SRTS…APEI), and 570–682 (DGST…EPSA). Residues 29–692 (GQIRYSVREE…IPNDSDLTLY (664 aa)) are Extracellular-facing. N-linked (GlcNAc...) asparagine glycans are attached at residues Asn-419 and Asn-545. An N-linked (GlcNAc...) asparagine glycan is attached at Asn-685. A helical membrane pass occupies residues 693-713 (LVVAVAAVSCVFLAFVIVLLA). Topologically, residues 714–932 (HRLRRWHKSR…KKKSGKKEKK (219 aa)) are cytoplasmic. Disordered stretches follow at residues 798-841 (LEEE…WPNN) and 902-932 (ATLT…KEKK). The span at 806 to 841 (FSQQAPPNTDWRFSQAQRPGTSGSQNGDDTGTWPNN) shows a compositional bias: polar residues. The segment covering 922–932 (NKKKSGKKEKK) has biased composition (basic residues).

Its subcellular location is the cell membrane. In terms of biological role, potential calcium-dependent cell-adhesion protein. May be involved in the establishment and maintenance of specific neuronal connections in the brain. The polypeptide is Protocadherin gamma-A2 (PCDHGA2) (Homo sapiens (Human)).